Consider the following 725-residue polypeptide: Eukaryotic elongation factor 2 kinase (725 aa).

Residues 1–12 (MADEDLIFRLEG) are compositionally biased toward basic and acidic residues. The disordered stretch occupies residues 1–38 (MADEDLIFRLEGVDGGQSPRAGHDGDSDGDSDDEEGYF). Ala-2 carries the N-acetylalanine modification. Phosphoserine is present on residues Ser-18 and Ser-27. Residues 27–36 (SDGDSDDEEG) are compositionally biased toward acidic residues. Residues Ser-61 and Ser-66 each carry the phosphoserine; by autocatalysis modification. Residues Ser-70, Ser-71, Ser-72, and Ser-74 each carry the phosphoserine modification. Ser-78 bears the Phosphoserine; by autocatalysis and TRPM7 mark. Residues 81-94 (FKEAWKHAIQKAKH) form a calmodulin-binding region. Residues 116 to 326 (RYNAVTGEWL…ICESMGLAPF (211 aa)) enclose the Alpha-type protein kinase domain. Ser-243 is subject to Phosphoserine. Residue 296 to 302 (GDGNLGV) coordinates ATP. Residues Thr-348 and Thr-353 each carry the phosphothreonine; by autocatalysis modification. Disordered regions lie at residues 352 to 405 (GTEE…PHSQ) and 423 to 477 (SRDH…SLGS). Ser-359 carries the phosphoserine; by MAPK13 and CDK1 modification. The segment covering 363-377 (RTLSGSRPPLLRPLS) has biased composition (low complexity). At Ser-366 the chain carries Phosphoserine; by autocatalysis, RPS6KA1 and RPS6KB1. Polar residues predominate over residues 386–404 (SDVTFDSLPSSPSSATPHS). Ser-392 carries the phosphoserine modification. Residue Ser-398 is modified to Phosphoserine; by AMPK. Composition is skewed to basic and acidic residues over residues 423–436 (SRDH…RESE) and 445–469 (SEKR…RKYE). A Phosphoserine modification is found at Ser-435. Residue Ser-445 is modified to Phosphoserine; by autocatalysis. A Phosphoserine modification is found at Ser-470. Ser-474 is modified (phosphoserine; by autocatalysis). Phosphoserine is present on Ser-477. Phosphoserine; by autocatalysis is present on Ser-491. Residue Ser-500 is modified to Phosphoserine; by PKA.

Belongs to the protein kinase superfamily. Alpha-type protein kinase family. As to quaternary structure, monomer or homodimer. Interacts with Calmodulin/CALM1; this interaction is strictly required for phosphorylation activity. In terms of processing, autophosphorylated at multiple residues, Thr-348 being the major site. Phosphorylated by AMP-activated protein kinase AMPK at Ser-398 leading to EEF2K activation and protein synthesis inhibition. Phosphorylated by TRPM7 at Ser-78 resulting in improved protein stability, higher EE2F phosphorylated and subsequently reduced rate of protein synthesis. Phosphorylation by other kinases such as CDK1 and MAPK13 at Ser-359 or RPS6KA1 and RPS6KB1 at Ser-366 instead decrease EEF2K activity and promote protein synthesis.

The catalysed reaction is [translation elongation factor 2] + ATP = [translation elongation factor 2]-phosphate + ADP + H(+). Undergoes calcium/calmodulin-dependent intramolecular autophosphorylation, and this results in it becoming partially calcium/calmodulin-independent. Its function is as follows. Threonine kinase that regulates protein synthesis by controlling the rate of peptide chain elongation. Upon activation by a variety of upstream kinases including AMPK or TRPM7, phosphorylates the elongation factor EEF2 at a single site, renders it unable to bind ribosomes and thus inactive. In turn, the rate of protein synthesis is reduced. This Homo sapiens (Human) protein is Eukaryotic elongation factor 2 kinase (EEF2K).